An 85-amino-acid polypeptide reads, in one-letter code: Small ribosomal subunit protein uS17 (85 aa).

The protein belongs to the universal ribosomal protein uS17 family. In terms of assembly, part of the 30S ribosomal subunit.

In terms of biological role, one of the primary rRNA binding proteins, it binds specifically to the 5'-end of 16S ribosomal RNA. The chain is Small ribosomal subunit protein uS17 from Pseudoalteromonas translucida (strain TAC 125).